The sequence spans 461 residues: Glutamyl-tRNA reductase (461 aa).

Substrate contacts are provided by residues 50-53, serine 111, 116-118, and glutamine 122; these read TCNR and EPQ. The active-site Nucleophile is the cysteine 51. 191–196 contacts NADP(+); the sequence is GAGEMA.

The protein belongs to the glutamyl-tRNA reductase family. As to quaternary structure, homodimer.

It carries out the reaction (S)-4-amino-5-oxopentanoate + tRNA(Glu) + NADP(+) = L-glutamyl-tRNA(Glu) + NADPH + H(+). Its pathway is porphyrin-containing compound metabolism; protoporphyrin-IX biosynthesis; 5-aminolevulinate from L-glutamyl-tRNA(Glu): step 1/2. In terms of biological role, catalyzes the NADPH-dependent reduction of glutamyl-tRNA(Glu) to glutamate 1-semialdehyde (GSA). The sequence is that of Glutamyl-tRNA reductase from Syntrophobacter fumaroxidans (strain DSM 10017 / MPOB).